Reading from the N-terminus, the 313-residue chain is tRNA-cytidine(32) 2-sulfurtransferase (313 aa).

The PP-loop motif motif lies at 47-52 (SGGKDS). C122, C125, and C213 together coordinate [4Fe-4S] cluster.

The protein belongs to the TtcA family. As to quaternary structure, homodimer. Mg(2+) is required as a cofactor. The cofactor is [4Fe-4S] cluster.

It is found in the cytoplasm. It carries out the reaction cytidine(32) in tRNA + S-sulfanyl-L-cysteinyl-[cysteine desulfurase] + AH2 + ATP = 2-thiocytidine(32) in tRNA + L-cysteinyl-[cysteine desulfurase] + A + AMP + diphosphate + H(+). It participates in tRNA modification. Functionally, catalyzes the ATP-dependent 2-thiolation of cytidine in position 32 of tRNA, to form 2-thiocytidine (s(2)C32). The sulfur atoms are provided by the cysteine/cysteine desulfurase (IscS) system. The protein is tRNA-cytidine(32) 2-sulfurtransferase of Yersinia pseudotuberculosis serotype IB (strain PB1/+).